An 83-amino-acid chain; its full sequence is Cell division topological specificity factor (83 aa).

It belongs to the MinE family.

Its function is as follows. Prevents the cell division inhibition by proteins MinC and MinD at internal division sites while permitting inhibition at polar sites. This ensures cell division at the proper site by restricting the formation of a division septum at the midpoint of the long axis of the cell. The chain is Cell division topological specificity factor from Buchnera aphidicola subsp. Baizongia pistaciae (strain Bp).